The following is a 607-amino-acid chain: ATP-dependent zinc metalloprotease FtsH 2 (607 aa).

Topologically, residues 1–2 (MR) are cytoplasmic. A helical membrane pass occupies residues 3–23 (SLWIVLVLVLGSALLLQVMAA). The Periplasmic segment spans residues 24–99 (SDDRIPYARF…PYTRVADELG (76 aa)). A helical transmembrane segment spans residues 100–120 (LPPYLWLLLPLAGLAAMGHLA). Over 121 to 607 (SRRATTAGTI…LREMVASGEA (487 aa)) the chain is Cytoplasmic. Residue 195-202 (GPPGTGKT) coordinates ATP. His-418 is a binding site for Zn(2+). The active site involves Glu-419. 2 residues coordinate Zn(2+): His-422 and Asp-495.

It in the central section; belongs to the AAA ATPase family. In the C-terminal section; belongs to the peptidase M41 family. In terms of assembly, homohexamer. Requires Zn(2+) as cofactor.

It localises to the cell inner membrane. Functionally, acts as a processive, ATP-dependent zinc metallopeptidase for both cytoplasmic and membrane proteins. Plays a role in the quality control of integral membrane proteins. The protein is ATP-dependent zinc metalloprotease FtsH 2 of Sorangium cellulosum (strain So ce56) (Polyangium cellulosum (strain So ce56)).